A 408-amino-acid chain; its full sequence is Putative UPF0496 protein 2 (408 aa).

2 helical membrane passes run 224 to 244 (RIARGTAAAALVGACAAAIVA) and 252 to 272 (ALVGIGVAAAAFGATPAGAAR). Positions 385–408 (MARGLPPPSPATVTTTSEERLTSS) are disordered.

Belongs to the UPF0496 family.

The protein localises to the membrane. This is Putative UPF0496 protein 2 from Oryza sativa subsp. indica (Rice).